A 278-amino-acid polypeptide reads, in one-letter code: Large ribosomal subunit protein uL2 (278 aa).

Residues 225 to 278 (MNPVDHPHGGGEGRTSGGRHPVTPWGKPTKGKKTRANKATDKYIVRSRHQKKKG) are disordered. Positions 269-278 (VRSRHQKKKG) are enriched in basic residues.

This sequence belongs to the universal ribosomal protein uL2 family. As to quaternary structure, part of the 50S ribosomal subunit. Forms a bridge to the 30S subunit in the 70S ribosome.

Its function is as follows. One of the primary rRNA binding proteins. Required for association of the 30S and 50S subunits to form the 70S ribosome, for tRNA binding and peptide bond formation. It has been suggested to have peptidyltransferase activity; this is somewhat controversial. Makes several contacts with the 16S rRNA in the 70S ribosome. This chain is Large ribosomal subunit protein uL2, found in Parvibaculum lavamentivorans (strain DS-1 / DSM 13023 / NCIMB 13966).